The chain runs to 101 residues: Putative pterin-4-alpha-carbinolamine dehydratase (101 aa).

The protein belongs to the pterin-4-alpha-carbinolamine dehydratase family.

The catalysed reaction is (4aS,6R)-4a-hydroxy-L-erythro-5,6,7,8-tetrahydrobiopterin = (6R)-L-erythro-6,7-dihydrobiopterin + H2O. In Burkholderia mallei (strain ATCC 23344), this protein is Putative pterin-4-alpha-carbinolamine dehydratase.